The primary structure comprises 443 residues: Carboxypeptidase M (443 aa).

Residues 1 to 17 (MDRARLWLGLLLPVVAA) form the signal peptide. Residues 21–311 (RYHHQEGMEA…ASLIEYIKQV (291 aa)) form the Peptidase M14 domain. Asn-38 is a glycosylation site (N-linked (GlcNAc...) asparagine). The Zn(2+) site is built by His-83 and Glu-86. 3 cysteine pairs are disulfide-bonded: Cys-138/Cys-285, Cys-242/Cys-284, and Cys-341/Cys-410. A glycan (N-linked (GlcNAc...) asparagine) is linked at Asn-164. His-190 is a Zn(2+) binding site. Glu-281 serves as the catalytic Proton donor/acceptor. An N-linked (GlcNAc...) asparagine glycan is attached at Asn-363. A lipid anchor (GPI-anchor amidated serine) is attached at Ser-423. The propeptide at 424–443 (AATKPSLGVFFMTLLYVFFK) is removed in mature form.

It belongs to the peptidase M14 family. Requires Zn(2+) as cofactor.

It is found in the cell membrane. The enzyme catalyses Cleavage of C-terminal arginine or lysine residues from polypeptides.. Specifically removes C-terminal basic residues (Arg or Lys) from peptides and proteins. It is believed to play important roles in the control of peptide hormone and growth factor activity at the cell surface, and in the membrane-localized degradation of extracellular proteins. In Mus musculus (Mouse), this protein is Carboxypeptidase M (Cpm).